The sequence spans 581 residues: 4-hydroxy-3-methylbut-2-en-1-yl diphosphate synthase (flavodoxin) (581 aa).

[4Fe-4S] cluster contacts are provided by Cys489, Cys492, Cys523, and Glu530.

The protein belongs to the IspG family. It depends on [4Fe-4S] cluster as a cofactor.

The catalysed reaction is (2E)-4-hydroxy-3-methylbut-2-enyl diphosphate + oxidized [flavodoxin] + H2O + 2 H(+) = 2-C-methyl-D-erythritol 2,4-cyclic diphosphate + reduced [flavodoxin]. Its pathway is isoprenoid biosynthesis; isopentenyl diphosphate biosynthesis via DXP pathway; isopentenyl diphosphate from 1-deoxy-D-xylulose 5-phosphate: step 5/6. Its function is as follows. Converts 2C-methyl-D-erythritol 2,4-cyclodiphosphate (ME-2,4cPP) into 1-hydroxy-2-methyl-2-(E)-butenyl 4-diphosphate. The sequence is that of 4-hydroxy-3-methylbut-2-en-1-yl diphosphate synthase (flavodoxin) from Porphyromonas gingivalis (strain ATCC BAA-308 / W83).